We begin with the raw amino-acid sequence, 220 residues long: N-(5'-phosphoribosyl)anthranilate isomerase (220 aa).

It belongs to the TrpF family.

It carries out the reaction N-(5-phospho-beta-D-ribosyl)anthranilate = 1-(2-carboxyphenylamino)-1-deoxy-D-ribulose 5-phosphate. It participates in amino-acid biosynthesis; L-tryptophan biosynthesis; L-tryptophan from chorismate: step 3/5. The chain is N-(5'-phosphoribosyl)anthranilate isomerase from Gloeothece citriformis (strain PCC 7424) (Cyanothece sp. (strain PCC 7424)).